Consider the following 120-residue polypeptide: Large ribosomal subunit protein bL19 (120 aa).

The protein belongs to the bacterial ribosomal protein bL19 family.

Its function is as follows. This protein is located at the 30S-50S ribosomal subunit interface and may play a role in the structure and function of the aminoacyl-tRNA binding site. In Gloeothece citriformis (strain PCC 7424) (Cyanothece sp. (strain PCC 7424)), this protein is Large ribosomal subunit protein bL19.